Consider the following 128-residue polypeptide: Large ribosomal subunit protein uL22 (128 aa).

The protein belongs to the universal ribosomal protein uL22 family. Part of the 50S ribosomal subunit.

This protein binds specifically to 23S rRNA; its binding is stimulated by other ribosomal proteins, e.g. L4, L17, and L20. It is important during the early stages of 50S assembly. It makes multiple contacts with different domains of the 23S rRNA in the assembled 50S subunit and ribosome. In terms of biological role, the globular domain of the protein is located near the polypeptide exit tunnel on the outside of the subunit, while an extended beta-hairpin is found that lines the wall of the exit tunnel in the center of the 70S ribosome. The protein is Large ribosomal subunit protein uL22 of Nitrobacter winogradskyi (strain ATCC 25391 / DSM 10237 / CIP 104748 / NCIMB 11846 / Nb-255).